Here is a 1766-residue protein sequence, read N- to C-terminus: Putative ATP-dependent RNA helicase R366 (1766 aa).

The interval 209–239 is disordered; sequence KSSSNQNSNQSNQESNESNQEPNESNQEINQ. Low complexity predominate over residues 210 to 239; that stretch reads SSSNQNSNQSNQESNESNQEPNESNQEINQ. A Helicase ATP-binding domain is found at 656–865; the sequence is YHHYSNNRVL…RYYRRINDNR (210 aa). 669–676 serves as a coordination point for ATP; it reads GATGVGKS. The short motif at 812-815 is the DEAH box element; the sequence is DEAH. The region spanning 947-1116 is the Helicase C-terminal domain; that stretch reads DIHKSIKAIN…TMVKLIKSYP (170 aa).

This sequence belongs to the DEAD box helicase family. DEAH subfamily.

The enzyme catalyses ATP + H2O = ADP + phosphate + H(+). The sequence is that of Putative ATP-dependent RNA helicase R366 from Acanthamoeba polyphaga mimivirus (APMV).